The sequence spans 452 residues: Translation initiation factor eIF2B subunit gamma (452 aa).

Methionine 1 bears the N-acetylmethionine mark. Serine 261 is subject to Phosphoserine.

This sequence belongs to the eIF-2B gamma/epsilon subunits family. Component of the translation initiation factor 2B (eIF2B) complex which is a heterodecamer of two sets of five different subunits: alpha, beta, gamma, delta and epsilon. Subunits alpha, beta and delta comprise a regulatory subcomplex and subunits epsilon and gamma comprise a catalytic subcomplex. Within the complex, the hexameric regulatory complex resides at the center, with the two heterodimeric catalytic subcomplexes bound on opposite sides.

The protein resides in the cytoplasm. It localises to the cytosol. Its activity is regulated as follows. Activated by the chemical integrated stress response (ISR) inhibitor ISRIB which stimulates guanine nucleotide exchange factor activity for both phosphorylated and unphosphorylated eIF2. Acts as a component of the translation initiation factor 2B (eIF2B) complex, which catalyzes the exchange of GDP for GTP on the eukaryotic initiation factor 2 (eIF2) complex gamma subunit. Its guanine nucleotide exchange factor activity is repressed when bound to eIF2 complex phosphorylated on the alpha subunit, thereby limiting the amount of methionyl-initiator methionine tRNA available to the ribosome and consequently global translation is repressed. This chain is Translation initiation factor eIF2B subunit gamma (EIF2B3), found in Bos taurus (Bovine).